Reading from the N-terminus, the 344-residue chain is Outer membrane protein assembly factor BamC (344 aa).

The signal sequence occupies residues 1 to 24 (MAYSVQKSRLAKVAGVSLVLLLAA). The N-palmitoyl cysteine moiety is linked to residue Cys-25. Cys-25 carries the S-diacylglycerol cysteine lipid modification.

The protein belongs to the BamC family. As to quaternary structure, part of the Bam complex, which is composed of the outer membrane protein BamA, and four lipoproteins BamB, BamC, BamD and BamE. Forms a subcomplex with BamD and BamE. The Bam complex has the shape of a hat, with the BamA beta-barrel crown in the outer membrane and the periplasmic brim formed by the BamA POTRA domains and the 4 lipoproteins.

It is found in the cell outer membrane. Part of the outer membrane protein assembly complex (Bam), which is involved in assembly and insertion of beta-barrel proteins into the outer membrane. Nonessential member of the complex that stabilizes the interaction between the essential proteins BamA and BamD. Efficient substrate folding and insertion into the outer membrane requires all 5 subunits. A lateral gate may open between the first and last strands of the BamA beta-barrel that allows substrate to insert into the outer membrane; comparison of the structures of complete and nearly complete Bam complexes show there is considerable movement of all 5 proteins. The sequence is that of Outer membrane protein assembly factor BamC from Escherichia coli (strain K12).